Reading from the N-terminus, the 2036-residue chain is MASSADVYVFGDQSTPVLDKLQALVRVKDNALLTSFLGEAFLAVRREIVSLSSLERKSIPEAESLSLLLEGVRRSEPHAALDSAFVCIYEIGYYIDYLARSDKQHPPAAPSLLLGICTGSIAAAAVSCAKDVFEISRLGVEAATVAFRLGMHVRRRAENLGYSTPSSWSMILSSNQEELVSEALKEFSKEKNLTYSSRPYISATGPGFTTISGPPSILESVKSCDTFSGKRLYPAPIYGPYHNSSSYSESSLEHGLASILEDVGFLENEMLIPIISCASGSRLDQLSFGNLLKNVLSSALSQQIRMDLVTDALVETVSGTEATLIPVNAQTTVCSLADWLAKRGATTRIGPTLESLTKDRAEPNLAPGDENKIAIIGFSGRFPEADNLDEFWDLLIRGLDVHKPVPEERFARDHYDPTGQRKNTSQVQYGCWLKSAGYFDTQFFHMSPKEAMQTDPAQRLALLTAYEALEMAGVVPDRTPSTQRNRVGVYYGTTSNDWGEVNSSQDVDTYYIPGANRAFIPGRVNYFFKFTGPSIAVDTACSSSLAAINLAITSLKNRDCDTAIAGGTNVMTNPDNFAGLDRGHFLSRTGNCKAFDDGADGYCRADGIGTLILKRLPDAIADSDPIFGVILGAHTNHSAESVSITRPLADAQEYLFKKLLNETGIHPHDVSYVEMHGTGTQAGDAVEMRSVLNSFAFDHSRPRDKSLYLGSVKANVGHAESASGVLAIIKVLLMMQKNTIPPHCGIKTKINQGFPKDLDHRGVRIALKDSVDWSRPEGGKRRVLVNNFSAAGGNTSLLLEDGPAVHPARQHQDGDARTEHVVAVSARSTKALEENLKALEAYIANSWAPEGELLSQLSYTTTARRVHHSRRVAFVTNGLDDLRKSLLKAATDAGQVKGIPAVSPKVGFLFTGQGAQETAMAIGYYKSFSSFRSDIHQLDSIATLQGLPSVLPLIHGTTPVEDLSAVVVQLGTCIIQISLARFWISLGITPQYVIGHSLGEYAALQIAGVLSVNDAIFLCGHRAALLDKKCTAYTHGMVAVKAAADDLRQHISSDLKVEIACVNGAEDTVLSGPNADIESLCGKLTQAGYKLHKLEIPFAFHSSQVDPILDDLEELASQVGFHEPKLPIVSPLLRTLLTGDTLGPQYIRRHCRETVDFLGAIKMAESQGIMDRSGMCIEIGAHPILTRMVKSIIGQDFRCLASLRRKEDHFKTLADSLCALHLAGFSVNWDEYHRDFASSRNVLQLPKYSWQLANYWMQYKYSWCLTKGDAPVENGPVGAVVQARALRLSDSVHNVIEQVHGDKRSSITVESDMHDPSLLAIAQNHRVNGLTMAPSTLFADIAFTLAKHLIQNHGLDTHTNLPSINNMAVEKALIVGETGPQLFRASLDMDWTTMRGSVRIFSVGANGKQTTLHAVCDVAVENPSSHRESWQSNAYLIQRGIKQLVQGASDGSAHMMRRGLLYKIFSNSVQYGSAFQGIEQVWFDSEGLEGTGKVFMPSGKDTFALNPYCCDSLGHITGFIMNCSDSLDLDDHVYINHGWRTLRLVEPYQCDVQYQTYVKMQAVGSDDSTYSGDVHVLRDGKIIGICGGVTFKKVARKVLEMLLPKPSGAKAKHGVVKHVAPEPVKHVVLTPPSTTSHSVGTTSPPEPTESPVGSASGLIQKALEIIADEIGVDISQLTDTTLLADLGVDSLMSLTILGNFREELDLDIPAAQFYEFSTVQDLKSFLGANDQDFSSSNSEAESSASSAASTSPSDHGDDVVEEVKPVVAEIPRSTSTILQGTKHCSQTLFLFPDGAGSATSYVTLPSISSDMRVIGLNSPYLTKPHEFNCALQDITGSYLNEVRRRQPQGPYHLAGWSAGGVSAFDAARQLVSEGEVVESLILIDSPNPVGLGKLPKRMYDFLEKSGIFGAFEMGEEAQAPPDWLFQHFCVFIEALDRYVPEPFEHGMAPKTTIIWAADGVCKNPDDPRPEAQPDDPRGMNWLLNNREDFGPNGWDEFIGAGNISTMAIENANHFTMMREPIASALCAKIRETMGVN.

The N-terminal acylcarrier protein transacylase domain (SAT) stretch occupies residues Y8 to H242. A Ketosynthase family 3 (KS3) domain is found at E370 to D801. Residues C541, H676, and H718 each act as for beta-ketoacyl synthase activity in the active site. The interval F908–H1209 is acyl/malonyl transferases. S997 acts as the For acyl/malonyl transferase activity in catalysis. The tract at residues H1293 to S1425 is N-terminal hotdog fold. The PKS/mFAS DH domain maps to H1293–E1600. Residues V1295–L1599 form a product template (PT) domain region. The Proton acceptor; for dehydratase activity role is filled by H1325. Positions S1452 to E1600 are C-terminal hotdog fold. D1511 (proton donor; for dehydratase activity) is an active-site residue. A disordered region spans residues V1628–S1654. The span at S1638 to S1654 shows a compositional bias: low complexity. The region spanning G1653 to D1730 is the Carrier domain. S1690 is modified (O-(pantetheine 4'-phosphoryl)serine). Residues F1733 to D1758 form a disordered region. Positions S1734 to S1753 are enriched in low complexity. S1857 acts as the For thioesterase activity in catalysis.

Its pathway is secondary metabolite biosynthesis. Functionally, polyketide synthase; part of the gene cluster that mediates the biosynthesis of bikaverin, a red pigment also considered as a mycotoxin. The first stage is catalyzed by the polyketide synthase bik1, which catalyzes the formation of the intermediate SMA76a also knowm as pre-bikaverin. FAD-dependent monooxygenase bik2 might then be responsible for the oxidation of pre-bikaverin to oxo-pre-bikaverin which is in turn methylated by the O-methyltransferase bik3 to me-oxo-pre-bikaverin. A further cycle of oxydation and methylation by bik2 and bik3 leads to the final product of bikaverin, via a nor-bikaverin intermediate. The chain is Bikaverin polyketide synthase bik1 from Gibberella fujikuroi (strain CBS 195.34 / IMI 58289 / NRRL A-6831) (Bakanae and foot rot disease fungus).